Here is a 185-residue protein sequence, read N- to C-terminus: Disulfide bond formation protein B (185 aa).

Over 1 to 25 (MLLFFVILGIFVLTILKAISKQRWS) the chain is Cytoplasmic. Residues 26-42 (WLLLAASALSLELSALY) form a helical membrane-spanning segment. Topologically, residues 43–60 (FQHVMQLEPCVMCVYERL) are periplasmic. Cys52 and Cys55 are oxidised to a cystine. The chain crosses the membrane as a helical span at residues 61-76 (AMLGILLAGLIGASSP). At 77–83 (NNVFIRL) the chain is on the cytoplasmic side. A helical membrane pass occupies residues 84–101 (SAFLLWGISAVWGILLAI). Residues 102-156 (KHTDYQLHPSPFFTCDFFPNFPAWAPLHEWLPWLFNPTGDCSDIVWQFLGYSMPQ) lie on the Periplasmic side of the membrane. The cysteines at positions 116 and 142 are disulfide-linked. A helical transmembrane segment spans residues 157–175 (WLIVSFSLYTLLFIIFAIS). Over 176 to 185 (AVLKTKKQLF) the chain is Cytoplasmic.

Belongs to the DsbB family.

The protein localises to the cell inner membrane. Its function is as follows. Required for disulfide bond formation in some periplasmic proteins. Acts by oxidizing the DsbA protein. This is Disulfide bond formation protein B from Psychromonas ingrahamii (strain DSM 17664 / CCUG 51855 / 37).